Reading from the N-terminus, the 699-residue chain is Integrator complex subunit 10 (699 aa).

Phosphoserine is present on residues Ser220 and Ser370. Lys453 is covalently cross-linked (Glycyl lysine isopeptide (Lys-Gly) (interchain with G-Cter in SUMO2)).

Belongs to the Integrator subunit 10 family. Component of the Integrator complex, composed of core subunits INTS1, INTS2, INTS3, INTS4, INTS5, INTS6, INTS7, INTS8, INTS9/RC74, INTS10, INTS11/CPSF3L, INTS12, INTS13, INTS14 and INTS15. The core complex associates with protein phosphatase 2A subunits PPP2CA and PPP2R1A, to form the Integrator-PP2A (INTAC) complex. INTS10 is part of the tail subcomplex, composed of INTS10, INTS13, INTS14 and INTS15.

The protein localises to the nucleus. Its function is as follows. Component of the integrator complex, a multiprotein complex that terminates RNA polymerase II (Pol II) transcription in the promoter-proximal region of genes. The integrator complex provides a quality checkpoint during transcription elongation by driving premature transcription termination of transcripts that are unfavorably configured for transcriptional elongation: the complex terminates transcription by (1) catalyzing dephosphorylation of the C-terminal domain (CTD) of Pol II subunit POLR2A/RPB1 and SUPT5H/SPT5, (2) degrading the exiting nascent RNA transcript via endonuclease activity and (3) promoting the release of Pol II from bound DNA. The integrator complex is also involved in terminating the synthesis of non-coding Pol II transcripts, such as enhancer RNAs (eRNAs), small nuclear RNAs (snRNAs), telomerase RNAs and long non-coding RNAs (lncRNAs). Within the integrator complex, INTS10 is part of the integrator tail module that acts as a platform for the recruitment of transcription factors at promoters. May be not involved in the recruitment of cytoplasmic dynein to the nuclear envelope, probably as component of the integrator complex. This Macaca fascicularis (Crab-eating macaque) protein is Integrator complex subunit 10 (INTS10).